We begin with the raw amino-acid sequence, 462 residues long: Transcription factor-like protein EUC1 (462 aa).

Disordered regions lie at residues Gly-11–Pro-43 and Arg-66–Lys-97. Residues Ser-17 and Ser-23 each carry the phosphoserine modification. The segment covering Asp-26 to Gly-35 has biased composition (basic and acidic residues). The interval Ser-81–Asn-140 is homodimerization region. Residues Asn-105–Leu-135 adopt a coiled-coil conformation. Disordered stretches follow at residues Gln-190–Trp-214 and Gly-226–Arg-289. A compositionally biased stretch (polar residues) spans Asn-197–Trp-214. Lys-231 is covalently cross-linked (Glycyl lysine isopeptide (Lys-Gly) (interchain with G-Cter in SUMO)). Residues Ser-237 and Ser-249 each carry the phosphoserine modification. Positions Glu-240–Glu-251 are enriched in acidic residues. Residues Asn-252–Glu-282 are compositionally biased toward polar residues. At Thr-254 the chain carries Phosphothreonine. Residues Tyr-296–Arg-385 are GCR1 DNA-binding region. Residues Ser-441–Thr-455 show a composition bias toward polar residues. The tract at residues Ser-441–Thr-462 is disordered.

In terms of assembly, homodimer. Interacts with SLX5. In terms of processing, sumoylated at Lys-231 and subsequently ubiquitinated by the SUMO-targeted ubiquitin ligase (STUbL) complex SLX5/SLX8.

It is found in the chromosome. Its function is as follows. Transcription factor-like protein that binds to specific DNA motifs called ub-HS-motif associated with several locations where proteins other than histone H2B are ubiquitinated (ub-hotspots). Ubiquitination at these sites depends on the SUMO-targeted ubiquitin ligase (STUbL) complex SLX5/SLX8 and protein turnover on the CDC48 segregase. UBC9, SIZ1, or SIZ2 sumoylate DNA-bound EUC1 to stabilize its DNA-binding. Sumoylated EUC1 acts a cofactor required for the recruitment of the SLX5/SLX8 STUbL complex via specific contacts between EUC1 and SLX5, as well as an additional SUMO-mediated interaction. SLX5/SLX8 then ubiquitinates EUC1 and presumably other targets at ub-hotspots, and the CDC48/UFD1/NPL4 complex, together with UBX4 and UBX5, removes Lys-48-linked ubiquitinated proteins from chromatin. Ubiquitinated proteins could be either degraded by the proteasome or recycled by deubiquitination. EUC1 itself does not seem to underlie extensive turnover, as it is a very stable protein. EUC1 is able to act as a transcription factor, but its function at ub-hotspots does not seem to depend on this ability. EUC1-mediated ub-hotspots are crucial during stress responses when gene expression control is impaired. The chain is Transcription factor-like protein EUC1 from Saccharomyces cerevisiae (strain ATCC 204508 / S288c) (Baker's yeast).